A 78-amino-acid polypeptide reads, in one-letter code: MKKQNLIDMEGVVTESLPNAMFRVCLDNGCEVLTHISGKIRRNYIRILPGDRVKVELTPYDLTKGRITYRLRAKSSNS.

An S1-like domain is found at 1 to 72 (MKKQNLIDME…TKGRITYRLR (72 aa)).

The protein belongs to the IF-1 family. Component of the 30S ribosomal translation pre-initiation complex which assembles on the 30S ribosome in the order IF-2 and IF-3, IF-1 and N-formylmethionyl-tRNA(fMet); mRNA recruitment can occur at any time during PIC assembly.

It localises to the plastid. Its subcellular location is the chloroplast. In terms of biological role, one of the essential components for the initiation of protein synthesis. Stabilizes the binding of IF-2 and IF-3 on the 30S subunit to which N-formylmethionyl-tRNA(fMet) subsequently binds. Helps modulate mRNA selection, yielding the 30S pre-initiation complex (PIC). Upon addition of the 50S ribosomal subunit IF-1, IF-2 and IF-3 are released leaving the mature 70S translation initiation complex. This Physcomitrium patens (Spreading-leaved earth moss) protein is Translation initiation factor IF-1, chloroplastic.